The following is a 234-amino-acid chain: Redox-sensing transcriptional repressor Rex (234 aa).

Positions Thr-17–Phe-56 form a DNA-binding region, H-T-H motif. NAD(+) is bound at residue Gly-91 to Gly-96.

The protein belongs to the transcriptional regulatory Rex family. As to quaternary structure, homodimer.

Its subcellular location is the cytoplasm. Modulates transcription in response to changes in cellular NADH/NAD(+) redox state. This Deinococcus radiodurans (strain ATCC 13939 / DSM 20539 / JCM 16871 / CCUG 27074 / LMG 4051 / NBRC 15346 / NCIMB 9279 / VKM B-1422 / R1) protein is Redox-sensing transcriptional repressor Rex.